We begin with the raw amino-acid sequence, 101 residues long: Small ribosomal subunit protein uS14 (101 aa).

Belongs to the universal ribosomal protein uS14 family. As to quaternary structure, part of the 30S ribosomal subunit. Contacts proteins S3 and S10.

Its function is as follows. Binds 16S rRNA, required for the assembly of 30S particles and may also be responsible for determining the conformation of the 16S rRNA at the A site. In Cellvibrio japonicus (strain Ueda107) (Pseudomonas fluorescens subsp. cellulosa), this protein is Small ribosomal subunit protein uS14.